The chain runs to 610 residues: Sensor protein kinase WalK (610 aa).

Helical transmembrane passes span 14-34 (LVIVYVLLIIIGMQIIGLYFT) and 184-204 (IFIVGTGISLLITVILGFFIA). An HAMP domain is found at 205-257 (RTITKPITDMRNQTVEMSKGNYTQRVKIYGNDEIGELALAFNNLSKRVQEAQA). The 72-residue stretch at 262–333 (EKRRLDSVIT…IQENNDSFLL (72 aa)) folds into the PAS domain. Residues 326 to 379 (ENNDSFLLDINENEGIIARVNFSTIVQETGFVTGYIAVLHDVTEQQQVERERRE) enclose the PAC domain. The region spanning 383 to 601 (NVSHELRTPL…SIFITLPCEV (219 aa)) is the Histidine kinase domain. Residue His386 is modified to Phosphohistidine; by autocatalysis.

In terms of processing, autophosphorylated.

The protein localises to the cell membrane. It carries out the reaction ATP + protein L-histidine = ADP + protein N-phospho-L-histidine.. Its function is as follows. Member of the two-component regulatory system WalK/WalR. WalK functions as a sensor protein kinase which is autophosphorylated at a histidine residue and transfers its phosphate group to WalR. In Staphylococcus saprophyticus subsp. saprophyticus (strain ATCC 15305 / DSM 20229 / NCIMB 8711 / NCTC 7292 / S-41), this protein is Sensor protein kinase WalK (walK).